The sequence spans 466 residues: Polycomb group protein FIE1 (466 aa).

Residues 1 to 10 (MGPTSRNHKS) are compositionally biased toward basic residues. The disordered stretch occupies residues 1 to 71 (MGPTSRNHKS…GEGEPQETVL (71 aa)). Over residues 31-49 (SITASASASAFASPAVANS) the composition is skewed to low complexity. 6 WD repeats span residues 167-209 (DMNE…IYKS), 212-252 (GHGG…LILV), 258-298 (GHRH…EYVE), 324-361 (IHSNYVDCTKWLGDFVLSKSVENEILLWESITKEENPG), 374-414 (PECN…PVLI), and 421-460 (QVKSAIRQTAVSFDGSTILACTEDGNIWRWDEVDHPTAPV).

This sequence belongs to the WD repeat ESC family. As to quaternary structure, interacts with EZ1 and CLF. Component of the polycomb repressive complex 2 (PRC2), which methylates 'Lys-27' residues of histone H3 (H3K27me3), leading to transcriptional repression of the affected target gene. Expressed specifically in seed endosperm.

Functionally, polycomb group (PcG) protein. PcG proteins act by forming multiprotein complexes, which are required to maintain the transcriptionally repressive state of homeotic genes throughout development. PcG proteins are not required to initiate repression, but to maintain it during later stages of development. They act via the methylation of histones, rendering chromatin heritably changed in its expressibility. Together with EZ1 and CLF forms a complex that is involved in gene transcriptional repression by trimethylation on histone H3 'Lys-27' (H3K27me3) of target genes. Involved in the regulation of embryo and seed endosperm development. FIE1-containing PcG complex in seed endosperm regulates the expression of various transcription factors by trimethylation on histone H3 'Lys-27' (H3K27me3) of target genes. Involved in the overall expression regulation of nutrient metabolism genes, such as prolamin synthesis and seed storage protein synthesis genes. Can regulate valine, leucine and isoleucine metabolism-related genes. This Oryza sativa subsp. japonica (Rice) protein is Polycomb group protein FIE1.